The sequence spans 158 residues: Protein EOLA1 (158 aa).

The region spanning 6 to 92 (LSFRQPYAGF…IAGLVDIGET (87 aa)) is the ASCH domain.

Belongs to the EOLA family. Interacts with MT2A. In terms of tissue distribution, expressed primarily in heart, skeletal muscle, kidney, liver and placenta. Relatively high level of expression in spleen, colon and small intestine. Almost no expression in brain, thymus, lung and peripheral blood leukocytes. Expressed in epithelial cells (at protein level).

May play a role in cell protection during the inflammatory response. In epithelial cells, negatively regulates IL6 production and apoptosis through the regulation of MT2A expression. This chain is Protein EOLA1, found in Homo sapiens (Human).